A 290-amino-acid chain; its full sequence is MLPDSSVRLNKYISESGICSRREADRYIEQGNVFLNGKRATIGDQVKPGDIVKVNGQLIEPREAEDLVLIALNKPVGIVSTTEDGERDNIVDFVNHSKRVFPIGRLDKDSQGLIFLTNHGDLVNKILRAGNDHEKEYLVTVDKPITDEFIRGMGAGVPILGTVTKKCKVKKEAPFVFRITLVQGLNRQIRRMCEHFGYEVKKLERTRIMNVSLSGIPLGEWRDLTDDELIDLFKLIENSSSEAKPKAKAKPKTAGIKRPVVKMEKTAEKGGRPASNGKRFTSPGRKKKGR.

In terms of domain architecture, S4 RNA-binding spans 7 to 72 (VRLNKYISES…EAEDLVLIAL (66 aa)). 2 interaction with RNA regions span residues 105–108 (RLDK) and 187–190 (RQIR). Residue Asp-107 is the Nucleophile of the active site. Positions 241–290 (SEAKPKAKAKPKTAGIKRPVVKMEKTAEKGGRPASNGKRFTSPGRKKKGR) are disordered. Basic and acidic residues predominate over residues 261–271 (VKMEKTAEKGG).

The protein belongs to the pseudouridine synthase RsuA family. As to quaternary structure, monomer.

The catalysed reaction is uridine(2604) in 23S rRNA = pseudouridine(2604) in 23S rRNA. The enzyme catalyses uridine(35) in tRNA(Tyr) = pseudouridine(35) in tRNA(Tyr). In terms of biological role, dual specificity enzyme that catalyzes the synthesis of pseudouridine from uracil-2604 in 23S ribosomal RNA and from uracil-35 in the anticodon of tRNA(Tyr). This is Dual-specificity RNA pseudouridine synthase RluF (rluF) from Shigella flexneri.